Here is a 159-residue protein sequence, read N- to C-terminus: 17 kDa surface antigen (159 aa).

Residues 1-19 (MKLLSKIMIIALATSMLQA) form the signal peptide. A lipid anchor (N-palmitoyl cysteine) is attached at C20. C20 is lipidated: S-diacylglycerol cysteine.

This sequence belongs to the rickettsiale 17 kDa surface antigen family.

It is found in the cell outer membrane. The chain is 17 kDa surface antigen (omp) from Rickettsia japonica (strain ATCC VR-1363 / YH).